We begin with the raw amino-acid sequence, 372 residues long: Glutamate 5-kinase (372 aa).

Lys-14 serves as a coordination point for ATP. Residues Ser-54, Asp-141, and Asn-153 each coordinate substrate. ATP is bound at residue 173-174; that stretch reads TD. The 79-residue stretch at 280–358 folds into the PUA domain; sequence RGNVTLDEGA…DEIESLLGYI (79 aa).

Belongs to the glutamate 5-kinase family.

Its subcellular location is the cytoplasm. It catalyses the reaction L-glutamate + ATP = L-glutamyl 5-phosphate + ADP. The protein operates within amino-acid biosynthesis; L-proline biosynthesis; L-glutamate 5-semialdehyde from L-glutamate: step 1/2. In terms of biological role, catalyzes the transfer of a phosphate group to glutamate to form L-glutamate 5-phosphate. This chain is Glutamate 5-kinase, found in Nitrosospira multiformis (strain ATCC 25196 / NCIMB 11849 / C 71).